A 208-amino-acid chain; its full sequence is Ras-related protein M-Ras (208 aa).

GTP is bound by residues aspartate 21, glycine 22, glycine 23, valine 24, glycine 25, lysine 26, serine 27, alanine 28, phenylalanine 38, valine 39, proline 40, tyrosine 42, proline 44, and threonine 45. Serine 27 provides a ligand contact to Mg(2+). Positions 42 to 50 (YDPTIEDSY) match the Effector region motif. Mg(2+) contacts are provided by threonine 45 and aspartate 67. GTP is bound by residues glycine 70, asparagine 126, lysine 127, aspartate 129, serine 156, alanine 157, and lysine 158. Cysteine 205 is subject to Cysteine methyl ester. Cysteine 205 carries S-geranylgeranyl cysteine lipidation. Positions 206–208 (VIL) are cleaved as a propeptide — removed in mature form.

The protein belongs to the small GTPase superfamily. Ras family. In terms of assembly, component of the SHOC2-MRAS-PP1c (SMP) holophosphatase complex consisting of SHOC2, GTP-bound M-Ras/MRAS and the catalytic subunit of protein phosphatase 1 (either PPP1CA, PPP1CB or PPP1CC). Interacts (active GTP-bound form) with both SHOC2 and PP1c (all isoforms) to form a tertiary complex; SHOC2 and PP1c preferably bind M-Ras/MRAS, but they also bind K-Ras/KRAS, N-Ras/NRAS and H-Ras/HRAS. Interacts with RGL3. Interacts (active GTP-bound form preferentially) with RGS14. The cofactor is Mg(2+). Expressed in skeletal muscle cells.

The protein resides in the cell membrane. The enzyme catalyses GTP + H2O = GDP + phosphate + H(+). In terms of biological role, signal transducer in the Ras-MAPK signaling pathway that regulates cell proliferation and survival. Core component of the SHOC2-MRAS-PP1c (SMP) holophosphatase complex that regulates the MAPK pathway activation. The formation of the SMP complex only occurs when MRAS is GTP-bound. MRAS has low intrinsic GTPase activity and may require additional factors for activation. The SMP complex specifically dephosphorylates the inhibitory phosphorylation at 'Ser-259' of RAF1 kinase, 'Ser-365' of BRAF kinase and 'Ser-214' of ARAF kinase, stimulating their kinase activities. In Rattus norvegicus (Rat), this protein is Ras-related protein M-Ras (Mras).